The following is a 256-amino-acid chain: Hemin import ATP-binding protein HmuV (256 aa).

Residues I2 to D238 form the ABC transporter domain. Residue G34–S41 coordinates ATP.

Belongs to the ABC transporter superfamily. Heme (hemin) importer (TC 3.A.1.14.5) family. In terms of assembly, the complex is composed of two ATP-binding proteins (HmuV), two transmembrane proteins (HmuU) and a solute-binding protein (HmuT).

It is found in the cell inner membrane. Part of the ABC transporter complex HmuTUV involved in hemin import. Responsible for energy coupling to the transport system. In Escherichia coli O6:K15:H31 (strain 536 / UPEC), this protein is Hemin import ATP-binding protein HmuV.